The sequence spans 187 residues: GTP cyclohydrolase 1 (187 aa).

Zn(2+) contacts are provided by cysteine 78, histidine 81, and cysteine 150.

Belongs to the GTP cyclohydrolase I family. In terms of assembly, homomer.

The enzyme catalyses GTP + H2O = 7,8-dihydroneopterin 3'-triphosphate + formate + H(+). It functions in the pathway cofactor biosynthesis; 7,8-dihydroneopterin triphosphate biosynthesis; 7,8-dihydroneopterin triphosphate from GTP: step 1/1. This chain is GTP cyclohydrolase 1, found in Brevibacillus brevis (strain 47 / JCM 6285 / NBRC 100599).